A 65-amino-acid chain; its full sequence is Large ribosomal subunit protein bL35 (65 aa).

Belongs to the bacterial ribosomal protein bL35 family.

This Aliarcobacter butzleri (strain RM4018) (Arcobacter butzleri) protein is Large ribosomal subunit protein bL35.